The primary structure comprises 82 residues: Small ribosomal subunit protein bS18 (82 aa).

Residues 1-20 are disordered; it reads MVDINQIPTRRPFHRRHKTC.

It belongs to the bacterial ribosomal protein bS18 family. As to quaternary structure, part of the 30S ribosomal subunit. Forms a tight heterodimer with protein bS6.

Binds as a heterodimer with protein bS6 to the central domain of the 16S rRNA, where it helps stabilize the platform of the 30S subunit. The sequence is that of Small ribosomal subunit protein bS18 from Brucella suis (strain ATCC 23445 / NCTC 10510).